The following is a 580-amino-acid chain: Laccase-5 (580 aa).

A signal peptide spans 1–25 (MDVTKSLLCFISFVAFLLFSSVAEA). Plastocyanin-like domains lie at 34–150 (IIQA…PPAG) and 160–312 (RNVP…YKSA). N80 carries an N-linked (GlcNAc...) asparagine glycan. Cu cation-binding residues include H84, H86, H129, and H131. Residues N189, N300, N340, N392, N402, N410, and N443 are each glycosylated (N-linked (GlcNAc...) asparagine). Residues 428–564 (DFPAKPPVKF…AMAFLVENGN (137 aa)) enclose the Plastocyanin-like 3 domain. The Cu cation site is built by H481, H484, H486, H543, C544, H545, and H549.

The protein belongs to the multicopper oxidase family. Cu cation is required as a cofactor. In terms of tissue distribution, ubiquitous and constitutive.

The protein localises to the secreted. Its subcellular location is the extracellular space. It is found in the apoplast. The catalysed reaction is 4 hydroquinone + O2 = 4 benzosemiquinone + 2 H2O. Functionally, lignin degradation and detoxification of lignin-derived products. The chain is Laccase-5 (LAC5) from Arabidopsis thaliana (Mouse-ear cress).